A 174-amino-acid chain; its full sequence is Male-enhanced antigen 1 (174 aa).

Disordered regions lie at residues 1 to 83 (MAAV…DGAA) and 95 to 123 (HLPD…IPMD). Composition is skewed to acidic residues over residues 38-48 (SSEEPEEEQEE), 65-82 (PEQE…EDGA), and 101-110 (LESEDEDEEG). A Phosphoserine modification is found at S103.

As to expression, highly expressed in testis. Transcripts can be found in primary and secondary spermatocytes, and spermatids, but the protein itself is only detected in spermatids. No expression in Leydig cells, spermatogonia, or sperm. Very weak expression in the heart, kidney, spleen, thymus and ovary.

In terms of biological role, may play an important role in spermatogenesis and/or testis development. In Mus musculus (Mouse), this protein is Male-enhanced antigen 1 (Mea1).